The chain runs to 274 residues: Bis(5'-nucleosyl)-tetraphosphatase, symmetrical (274 aa).

The protein belongs to the Ap4A hydrolase family.

It catalyses the reaction P(1),P(4)-bis(5'-adenosyl) tetraphosphate + H2O = 2 ADP + 2 H(+). Its function is as follows. Hydrolyzes diadenosine 5',5'''-P1,P4-tetraphosphate to yield ADP. This Shewanella putrefaciens (strain CN-32 / ATCC BAA-453) protein is Bis(5'-nucleosyl)-tetraphosphatase, symmetrical.